A 357-amino-acid polypeptide reads, in one-letter code: Non-structural protein NS2 (357 aa).

Disordered stretches follow at residues 162–199 (QNER…AKEM) and 228–268 (LDEK…KTHI). 2 stretches are compositionally biased toward acidic residues: residues 230 to 243 (EKDE…EDEE) and 250 to 260 (DDDEQGEDASD).

Belongs to the orbivirus non-structural protein NS2 family.

Functionally, single-stranded RNA-binding protein. In Antilocapra americana (Pronghorn), this protein is Non-structural protein NS2 (Segment-8).